The primary structure comprises 449 residues: Probable glycine dehydrogenase (decarboxylating) subunit 1 (449 aa).

This sequence belongs to the GcvP family. N-terminal subunit subfamily. In terms of assembly, the glycine cleavage system is composed of four proteins: P, T, L and H. In this organism, the P 'protein' is a heterodimer of two subunits.

The enzyme catalyses N(6)-[(R)-lipoyl]-L-lysyl-[glycine-cleavage complex H protein] + glycine + H(+) = N(6)-[(R)-S(8)-aminomethyldihydrolipoyl]-L-lysyl-[glycine-cleavage complex H protein] + CO2. Its function is as follows. The glycine cleavage system catalyzes the degradation of glycine. The P protein binds the alpha-amino group of glycine through its pyridoxal phosphate cofactor; CO(2) is released and the remaining methylamine moiety is then transferred to the lipoamide cofactor of the H protein. The sequence is that of Probable glycine dehydrogenase (decarboxylating) subunit 1 from Solibacter usitatus (strain Ellin6076).